The sequence spans 101 residues: Phosphoribosyl-AMP cyclohydrolase (101 aa).

Asp71 contacts Mg(2+). A Zn(2+)-binding site is contributed by Cys72. Residues Asp73 and Asp75 each coordinate Mg(2+). Zn(2+)-binding residues include Cys88 and Cys95.

The protein belongs to the PRA-CH family. Homodimer. Requires Mg(2+) as cofactor. Zn(2+) is required as a cofactor.

It is found in the cytoplasm. The catalysed reaction is 1-(5-phospho-beta-D-ribosyl)-5'-AMP + H2O = 1-(5-phospho-beta-D-ribosyl)-5-[(5-phospho-beta-D-ribosylamino)methylideneamino]imidazole-4-carboxamide. It functions in the pathway amino-acid biosynthesis; L-histidine biosynthesis; L-histidine from 5-phospho-alpha-D-ribose 1-diphosphate: step 3/9. Functionally, catalyzes the hydrolysis of the adenine ring of phosphoribosyl-AMP. This Bacillus cereus (strain G9842) protein is Phosphoribosyl-AMP cyclohydrolase.